Reading from the N-terminus, the 110-residue chain is MATPLFFTDNAVAKVRELIEEEENPDLKLRVFVTGGGCSGFQYGFSFDESQEEDDTVIERDGVKLLVDSMSYQYLVGATIDYQEGLQGSQFVVQNPNASSTCGCGSSFSI.

The iron-sulfur cluster site is built by Cys38, Cys102, and Cys104.

Belongs to the HesB/IscA family. In terms of assembly, homodimer. Iron-sulfur cluster is required as a cofactor.

Functionally, required for insertion of 4Fe-4S clusters for at least IspG. The polypeptide is Iron-sulfur cluster insertion protein ErpA (Marinobacter nauticus (strain ATCC 700491 / DSM 11845 / VT8) (Marinobacter aquaeolei)).